The primary structure comprises 418 residues: Trafficking protein particle complex subunit 13 (418 aa).

This sequence belongs to the TRAPPC13 family. In terms of assembly, part of the multisubunit TRAPP (transport protein particle) complex.

In Rattus norvegicus (Rat), this protein is Trafficking protein particle complex subunit 13 (Trappc13).